The sequence spans 287 residues: MVNDLTPHFEDVQAHYDLSDDFFRLFLDPTQTYSCAHFEREDMTLEEAQIAKIDLALGKLGLQPGMTLLDIGCGWGATMRRAIAQYDVNVVGLTLSKNQAAHVQKSFDEMDTPLDRRVLLAGWEQFNEPVDRIVSIGAFEHFGHDRHADFFARAHKILPPDGVLLLHTITGLTRQQMVDHGLPLTLWLARFLKFIATEIFPGGQPPTIEMVEEQSAKTGFTLTRRQSLQPHYARTLDLWAEALQEHKSEAIAIQSEEVYERYMKYLTGCAKLFRVGYIDVNQFTLAK.

Residues 33–34 (YS), 72–74 (GCG), 94–99 (TLSKNQ), 123–124 (WE), and I136 each bind S-adenosyl-L-methionine. The active site involves C269.

Belongs to the CFA/CMAS family.

The enzyme catalyses a 1-acyl-2-(9Z)-enoyl-sn-glycero-3-phospholipid + S-adenosyl-L-methionine = a 1-acyl-2-(9-cyclopronane)-acyl-sn-glycero-3-phospholipid + S-adenosyl-L-homocysteine + H(+). The protein operates within lipid metabolism; mycolic acid biosynthesis. In terms of biological role, catalyzes the conversion of a double bond to a cis cyclopropane ring at the distal position of an alpha mycolic acid via the transfer of a methylene group from S-adenosyl-L-methionine. MmaA2 also catalyzes the biosynthesis of the cis-cyclopropanated methoxymycolates. Cyclopropanated mycolic acids are key factors participating in cell envelope permeability, host immunomodulation and persistence. The polypeptide is Cyclopropane mycolic acid synthase MmaA2 (cmaC) (Mycobacterium bovis (strain ATCC BAA-935 / AF2122/97)).